The primary structure comprises 80 residues: Omega-conotoxin-like 2/7 (80 aa).

The signal sequence occupies residues 1–22 (MKLTCMMIVAVMFLTASIFITA). The propeptide occupies 23–51 (DNSRNGIENLPRMRRHEMKKPKASKLNKR). Cystine bridges form between Cys-53/Cys-71, Cys-60/Cys-75, and Cys-70/Cys-79.

Belongs to the conotoxin O1 superfamily. In terms of tissue distribution, expressed by the venom duct.

Its subcellular location is the secreted. Functionally, omega-conotoxins act at presynaptic membranes, they bind and block voltage-gated calcium channels (Cav). The polypeptide is Omega-conotoxin-like 2/7 (Conus imperialis (Imperial cone)).